Here is a 341-residue protein sequence, read N- to C-terminus: Phosphoribosylformylglycinamidine cyclo-ligase (341 aa).

The protein belongs to the AIR synthase family.

Its subcellular location is the cytoplasm. It catalyses the reaction 2-formamido-N(1)-(5-O-phospho-beta-D-ribosyl)acetamidine + ATP = 5-amino-1-(5-phospho-beta-D-ribosyl)imidazole + ADP + phosphate + H(+). It participates in purine metabolism; IMP biosynthesis via de novo pathway; 5-amino-1-(5-phospho-D-ribosyl)imidazole from N(2)-formyl-N(1)-(5-phospho-D-ribosyl)glycinamide: step 2/2. The polypeptide is Phosphoribosylformylglycinamidine cyclo-ligase (Xanthomonas euvesicatoria pv. vesicatoria (strain 85-10) (Xanthomonas campestris pv. vesicatoria)).